The sequence spans 421 residues: Threonine--tRNA ligase editing subunit (421 aa).

It belongs to the class-II aminoacyl-tRNA synthetase family. Archaea-specific ThrRS editing domain subfamily. Probably interacts with its catalytic subunit.

The protein localises to the cytoplasm. Its function is as follows. Freestanding tRNA editing subunit of threonine--tRNA ligase, the catalytic subunit is probably AC Q9YDW0. Deacylates (edits) mischarged L-seryl-tRNA(Thr) in trans; has no activity on correctly charged L-threonyl-tRNA(Thr). Probably does not aminoacylate tRNA(Thr). Deacylates correctly charged glycyl-tRNA(Gly), but not glycyl-tRNA(Gly)(2'-dA76) (the terminal 2'-OH of tRNA adenine 76 has been dehydroxylated) nor the 2'-fluoro tRNA derivative, strongly suggesting the editing function is catalyzed by the 2'-OH of A76 of tRNA(Thr). This Aeropyrum pernix (strain ATCC 700893 / DSM 11879 / JCM 9820 / NBRC 100138 / K1) protein is Threonine--tRNA ligase editing subunit (thrS2).